A 62-amino-acid polypeptide reads, in one-letter code: Conotoxin Sr5.7 (62 aa).

Positions 1-22 are cleaved as a signal peptide; it reads MRCLPVFVILLLLIASAPSVDA. Residues 23 to 44 constitute a propeptide that is removed on maturation; it reads QLKTKDDVPLASFHDNAKGTQH.

This sequence belongs to the conotoxin T superfamily. Post-translationally, contains 2 disulfide bonds that can be either 'C1-C3, C2-C4' or 'C1-C4, C2-C3', since these disulfide connectivities have been observed for conotoxins with cysteine framework V (for examples, see AC P0DQQ7 and AC P81755). Expressed by the venom duct.

Its subcellular location is the secreted. This Conus spurius (Alphabet cone) protein is Conotoxin Sr5.7.